Here is a 157-residue protein sequence, read N- to C-terminus: 17.6 kDa class I heat shock protein 3 (157 aa).

In terms of domain architecture, sHSP spans 43 to 157 (DVAAFTNAKV…PEVKSIDISG (115 aa)).

Belongs to the small heat shock protein (HSP20) family. As to quaternary structure, may form oligomeric structures.

The protein resides in the cytoplasm. The chain is 17.6 kDa class I heat shock protein 3 (HSP17.6C) from Arabidopsis thaliana (Mouse-ear cress).